Consider the following 354-residue polypeptide: Protein-glutamate methylesterase/protein-glutamine glutaminase of group 3 operon (354 aa).

Residues 3–121 (RILLATSTVE…MQLEQPAIEK (119 aa)) form the Response regulatory domain. The CheB-type methylesterase domain maps to 158-340 (PIGIVGIAAS…LESIAENITA (183 aa)). Catalysis depends on residues Ser-167, His-194, and Asp-287.

This sequence belongs to the CheB family.

The protein localises to the cytoplasm. It catalyses the reaction [protein]-L-glutamate 5-O-methyl ester + H2O = L-glutamyl-[protein] + methanol + H(+). The catalysed reaction is L-glutaminyl-[protein] + H2O = L-glutamyl-[protein] + NH4(+). In terms of biological role, involved in chemotaxis. Part of a chemotaxis signal transduction system that modulates chemotaxis in response to various stimuli. Catalyzes the demethylation of specific methylglutamate residues introduced into the chemoreceptors (methyl-accepting chemotaxis proteins or MCP) by CheR. Also mediates the irreversible deamidation of specific glutamine residues to glutamic acid. This Rhizobium meliloti (strain 1021) (Ensifer meliloti) protein is Protein-glutamate methylesterase/protein-glutamine glutaminase of group 3 operon.